A 141-amino-acid polypeptide reads, in one-letter code: 3-hydroxyacyl-[acyl-carrier-protein] dehydratase FabZ (141 aa).

H48 is a catalytic residue.

This sequence belongs to the thioester dehydratase family. FabZ subfamily.

It localises to the cytoplasm. It catalyses the reaction a (3R)-hydroxyacyl-[ACP] = a (2E)-enoyl-[ACP] + H2O. Its function is as follows. Involved in unsaturated fatty acids biosynthesis. Catalyzes the dehydration of short chain beta-hydroxyacyl-ACPs and long chain saturated and unsaturated beta-hydroxyacyl-ACPs. The protein is 3-hydroxyacyl-[acyl-carrier-protein] dehydratase FabZ of Bacillus subtilis (strain 168).